A 347-amino-acid polypeptide reads, in one-letter code: NADH-ubiquinone oxidoreductase chain 2 (347 aa).

11 helical membrane-spanning segments follow: residues 3–23 (PVVL…VMTT), 25–45 (HWLL…PILM), 59–79 (YFLT…INLI), 96–116 (IIMT…FWVP), 122–142 (IQLS…MSIL), 149–169 (INLH…GWGG), 178–198 (IMAY…IYNP), 200–220 (MALL…MTFM), 237–257 (MPLL…LPPL), 274–294 (NSII…FFYM), and 325–345 (LLSP…MLAL).

The protein belongs to the complex I subunit 2 family. As to quaternary structure, core subunit of respiratory chain NADH dehydrogenase (Complex I) which is composed of 45 different subunits. Interacts with TMEM242.

It is found in the mitochondrion inner membrane. The enzyme catalyses a ubiquinone + NADH + 5 H(+)(in) = a ubiquinol + NAD(+) + 4 H(+)(out). Functionally, core subunit of the mitochondrial membrane respiratory chain NADH dehydrogenase (Complex I) which catalyzes electron transfer from NADH through the respiratory chain, using ubiquinone as an electron acceptor. Essential for the catalytic activity and assembly of complex I. This chain is NADH-ubiquinone oxidoreductase chain 2, found in Paranyctimene raptor (Unstriped tube-nosed fruit bat).